A 55-amino-acid chain; its full sequence is Large ribosomal subunit protein bL33 (55 aa).

It belongs to the bacterial ribosomal protein bL33 family.

This Rhodospirillum centenum (strain ATCC 51521 / SW) protein is Large ribosomal subunit protein bL33.